The following is a 257-amino-acid chain: Phosphonates import ATP-binding protein PhnC 1 (257 aa).

The 245-residue stretch at 2–246 (IELKNVSKVY…VFKDIYGRPL (245 aa)) folds into the ABC transporter domain. Residue 35–42 (GLSGAGKS) coordinates ATP.

The protein belongs to the ABC transporter superfamily. Phosphonates importer (TC 3.A.1.9.1) family. In terms of assembly, the complex is composed of two ATP-binding proteins (PhnC), two transmembrane proteins (PhnE) and a solute-binding protein (PhnD).

The protein resides in the cell membrane. It carries out the reaction phosphonate(out) + ATP + H2O = phosphonate(in) + ADP + phosphate + H(+). Its function is as follows. Part of the ABC transporter complex PhnCDE involved in phosphonates import. Responsible for energy coupling to the transport system. This Halalkalibacterium halodurans (strain ATCC BAA-125 / DSM 18197 / FERM 7344 / JCM 9153 / C-125) (Bacillus halodurans) protein is Phosphonates import ATP-binding protein PhnC 1.